The primary structure comprises 120 residues: Large ribosomal subunit protein uL18 (120 aa).

Positions 1–24 are disordered; the sequence is MITKAAKNATRKKRHARVRAKLTG. Over residues 9–20 the composition is skewed to basic residues; that stretch reads ATRKKRHARVRA.

It belongs to the universal ribosomal protein uL18 family. Part of the 50S ribosomal subunit; part of the 5S rRNA/L5/L18/L25 subcomplex. Contacts the 5S and 23S rRNAs.

Its function is as follows. This is one of the proteins that bind and probably mediate the attachment of the 5S RNA into the large ribosomal subunit, where it forms part of the central protuberance. The polypeptide is Large ribosomal subunit protein uL18 (Bacillus mycoides (strain KBAB4) (Bacillus weihenstephanensis)).